Reading from the N-terminus, the 201-residue chain is Small ribosomal subunit protein uS4c (201 aa).

The S4 RNA-binding domain occupies 89–152 (MRLDNILFRL…NSRTLVQNLL (64 aa)).

This sequence belongs to the universal ribosomal protein uS4 family. As to quaternary structure, part of the 30S ribosomal subunit. Contacts protein S5. The interaction surface between S4 and S5 is involved in control of translational fidelity.

The protein resides in the plastid. Its subcellular location is the chloroplast. Functionally, one of the primary rRNA binding proteins, it binds directly to 16S rRNA where it nucleates assembly of the body of the 30S subunit. In terms of biological role, with S5 and S12 plays an important role in translational accuracy. This chain is Small ribosomal subunit protein uS4c (rps4), found in Olimarabidopsis pumila (Dwarf rocket).